Consider the following 543-residue polypeptide: CTP synthase (543 aa).

Residues 1–265 (MTRYIFVTGG…DDYVVERFGL (265 aa)) form an amidoligase domain region. Ser13 lines the CTP pocket. Ser13 serves as a coordination point for UTP. ATP is bound by residues 14–19 (SLGKGI) and Asp71. Mg(2+) contacts are provided by Asp71 and Glu139. CTP contacts are provided by residues 146-148 (DIE), 186-191 (KTKPTQ), and Lys222. Residues 186 to 191 (KTKPTQ) and Lys222 each bind UTP. The 252-residue stretch at 290–541 (NIAMVGKYME…VNAALEYKAK (252 aa)) folds into the Glutamine amidotransferase type-1 domain. Gly351 provides a ligand contact to L-glutamine. Residue Cys378 is the Nucleophile; for glutamine hydrolysis of the active site. L-glutamine contacts are provided by residues 379-382 (LGMQ), Glu402, and Arg469. Catalysis depends on residues His514 and Glu516.

This sequence belongs to the CTP synthase family. As to quaternary structure, homotetramer.

It catalyses the reaction UTP + L-glutamine + ATP + H2O = CTP + L-glutamate + ADP + phosphate + 2 H(+). The catalysed reaction is L-glutamine + H2O = L-glutamate + NH4(+). It carries out the reaction UTP + NH4(+) + ATP = CTP + ADP + phosphate + 2 H(+). It participates in pyrimidine metabolism; CTP biosynthesis via de novo pathway; CTP from UDP: step 2/2. Its activity is regulated as follows. Allosterically activated by GTP, when glutamine is the substrate; GTP has no effect on the reaction when ammonia is the substrate. The allosteric effector GTP functions by stabilizing the protein conformation that binds the tetrahedral intermediate(s) formed during glutamine hydrolysis. Inhibited by the product CTP, via allosteric rather than competitive inhibition. Functionally, catalyzes the ATP-dependent amination of UTP to CTP with either L-glutamine or ammonia as the source of nitrogen. Regulates intracellular CTP levels through interactions with the four ribonucleotide triphosphates. This Stutzerimonas stutzeri (strain A1501) (Pseudomonas stutzeri) protein is CTP synthase.